Reading from the N-terminus, the 277-residue chain is 3-methyl-2-oxobutanoate hydroxymethyltransferase (277 aa).

Positions 43 and 82 each coordinate Mg(2+). 3-methyl-2-oxobutanoate-binding positions include 43-44, Asp82, and Lys112; that span reads DS. Glu114 contributes to the Mg(2+) binding site. The Proton acceptor role is filled by Glu181.

It belongs to the PanB family. Homodecamer; pentamer of dimers. It depends on Mg(2+) as a cofactor.

Its subcellular location is the cytoplasm. The enzyme catalyses 3-methyl-2-oxobutanoate + (6R)-5,10-methylene-5,6,7,8-tetrahydrofolate + H2O = 2-dehydropantoate + (6S)-5,6,7,8-tetrahydrofolate. The protein operates within cofactor biosynthesis; (R)-pantothenate biosynthesis; (R)-pantoate from 3-methyl-2-oxobutanoate: step 1/2. In terms of biological role, catalyzes the reversible reaction in which hydroxymethyl group from 5,10-methylenetetrahydrofolate is transferred onto alpha-ketoisovalerate to form ketopantoate. In Bacillus subtilis (strain 168), this protein is 3-methyl-2-oxobutanoate hydroxymethyltransferase.